A 504-amino-acid chain; its full sequence is Cytochrome P450 3A11 (504 aa).

Cys-443 is a heme binding site.

Belongs to the cytochrome P450 family. Requires heme as cofactor. As to expression, highly expressed in liver.

It localises to the endoplasmic reticulum membrane. It is found in the microsome membrane. It carries out the reaction an organic molecule + reduced [NADPH--hemoprotein reductase] + O2 = an alcohol + oxidized [NADPH--hemoprotein reductase] + H2O + H(+). Its function is as follows. Catalyzes erythromycin N-demethylation, nifedipine oxidation and testosterone 6 beta-hydroxylation. The sequence is that of Cytochrome P450 3A11 (Cyp3a11) from Mus musculus (Mouse).